We begin with the raw amino-acid sequence, 190 residues long: Large ribosomal subunit protein uL10 (190 aa).

Belongs to the universal ribosomal protein uL10 family. As to quaternary structure, part of the ribosomal stalk of the 50S ribosomal subunit. The N-terminus interacts with L11 and the large rRNA to form the base of the stalk. The C-terminus forms an elongated spine to which L12 dimers bind in a sequential fashion forming a multimeric L10(L12)X complex.

Its function is as follows. Forms part of the ribosomal stalk, playing a central role in the interaction of the ribosome with GTP-bound translation factors. This Trichodesmium erythraeum (strain IMS101) protein is Large ribosomal subunit protein uL10.